We begin with the raw amino-acid sequence, 67 residues long: MLYPSIDNLLLKIDSKYSLVTVAAKRARYMQLENDKGVLPSYQSDKFVGKALEEIHAGKLVLKNDDK.

Belongs to the RNA polymerase subunit omega family. The RNAP catalytic core consists of 2 alpha, 1 beta, 1 beta' and 1 omega subunit. When a sigma factor is associated with the core the holoenzyme is formed, which can initiate transcription.

It catalyses the reaction RNA(n) + a ribonucleoside 5'-triphosphate = RNA(n+1) + diphosphate. Its function is as follows. Promotes RNA polymerase assembly. Latches the N- and C-terminal regions of the beta' subunit thereby facilitating its interaction with the beta and alpha subunits. The polypeptide is DNA-directed RNA polymerase subunit omega (Listeria monocytogenes serotype 4a (strain HCC23)).